The following is a 255-amino-acid chain: High-affinity branched-chain amino acid transport ATP-binding protein LivG (255 aa).

Residues Leu6 to Glu254 form the ABC transporter domain. Gly38–Thr45 contributes to the ATP binding site.

Belongs to the ABC transporter superfamily.

Component of the leucine-specific transport system. The chain is High-affinity branched-chain amino acid transport ATP-binding protein LivG (livG) from Escherichia coli O157:H7.